The sequence spans 309 residues: Glutaminase (309 aa).

Substrate is bound by residues S65, N117, E162, N169, Y193, Y245, and V263.

This sequence belongs to the glutaminase family. As to quaternary structure, homotetramer.

It carries out the reaction L-glutamine + H2O = L-glutamate + NH4(+). The polypeptide is Glutaminase (Bacillus cereus (strain ATCC 10987 / NRS 248)).